The primary structure comprises 78 residues: Ferredoxin oxidoreductase 2 subunit ForD (78 aa).

4Fe-4S ferredoxin-type domains follow at residues 3-35 and 37-66; these read FVAD…FKAS and NSAW…HCIE. [4Fe-4S] cluster contacts are provided by C12, C17, C20, C24, C46, C49, C52, and C56.

As to quaternary structure, heterotetramer of one alpha, one beta, one delta and one gamma chain. [4Fe-4S] cluster serves as cofactor.

The sequence is that of Ferredoxin oxidoreductase 2 subunit ForD (forD2) from Aquifex aeolicus (strain VF5).